Reading from the N-terminus, the 376-residue chain is Carboxylic ester hydrolase LipN (376 aa).

Catalysis depends on residues Ser-216, Asp-316, and His-346.

This sequence belongs to the 'GDXG' lipolytic enzyme family.

Its subcellular location is the cytoplasm. It carries out the reaction a carboxylic ester + H2O = an alcohol + a carboxylate + H(+). It catalyses the reaction an acetyl ester + H2O = an aliphatic alcohol + acetate + H(+). The enzyme catalyses a butanoate ester + H2O = an aliphatic alcohol + butanoate + H(+). The catalysed reaction is an octanoate ester + H2O = an aliphatic alcohol + octanoate + H(+). It carries out the reaction decanoate ester + H2O = decanoate + an aliphatic alcohol + H(+). It catalyses the reaction a dodecanoate ester + H2O = an aliphatic alcohol + dodecanoate + H(+). The enzyme catalyses 1,2,3-tributanoylglycerol + H2O = dibutanoylglycerol + butanoate + H(+). The catalysed reaction is 4-acetoxyphenol + H2O = hydroquinone + acetate + H(+). Completely inhibited by tetrahydrolipstatin (THL), RHC-80267 and N-bromosuccinimide. Non specific carboxylic ester hydrolase. Hydrolyzes various pNP-esters, with a preference for short carbon chain substrates. Can also hydrolyze tributyrin to di- and monobutyrin and 4-hydroxyphenylacetate to hydroquinone. In Mycobacterium tuberculosis (strain ATCC 25618 / H37Rv), this protein is Carboxylic ester hydrolase LipN.